Reading from the N-terminus, the 619-residue chain is Threonine--tRNA ligase (619 aa).

The interval Met1–Glu143 is editing domain. The catalytic stretch occupies residues Pro201–Pro500. Positions 293, 345, and 469 each coordinate Zn(2+).

This sequence belongs to the class-II aminoacyl-tRNA synthetase family. As to quaternary structure, homodimer. Zn(2+) serves as cofactor.

The protein resides in the cytoplasm. The enzyme catalyses tRNA(Thr) + L-threonine + ATP = L-threonyl-tRNA(Thr) + AMP + diphosphate + H(+). In terms of biological role, catalyzes the attachment of threonine to tRNA(Thr) in a two-step reaction: L-threonine is first activated by ATP to form Thr-AMP and then transferred to the acceptor end of tRNA(Thr). Also edits incorrectly charged L-seryl-tRNA(Thr). In Methanothrix thermoacetophila (strain DSM 6194 / JCM 14653 / NBRC 101360 / PT) (Methanosaeta thermophila), this protein is Threonine--tRNA ligase.